Consider the following 72-residue polypeptide: Translation initiation factor IF-1 (72 aa).

Residues 1-72 (MTKEDSFEMH…SKGRIIFRSR (72 aa)) enclose the S1-like domain.

The protein belongs to the IF-1 family. Component of the 30S ribosomal translation pre-initiation complex which assembles on the 30S ribosome in the order IF-2 and IF-3, IF-1 and N-formylmethionyl-tRNA(fMet); mRNA recruitment can occur at any time during PIC assembly.

Its subcellular location is the cytoplasm. In terms of biological role, one of the essential components for the initiation of protein synthesis. Stabilizes the binding of IF-2 and IF-3 on the 30S subunit to which N-formylmethionyl-tRNA(fMet) subsequently binds. Helps modulate mRNA selection, yielding the 30S pre-initiation complex (PIC). Upon addition of the 50S ribosomal subunit IF-1, IF-2 and IF-3 are released leaving the mature 70S translation initiation complex. In Blochmanniella pennsylvanica (strain BPEN), this protein is Translation initiation factor IF-1.